Reading from the N-terminus, the 63-residue chain is Jingdongin-1 (63 aa).

Positions 1 to 22 are cleaved as a signal peptide; that stretch reads MLTLKKSMLLLFFLGTINLSLC. A propeptide spanning residues 23 to 44 is cleaved from the precursor; it reads EQERDADEEERRDDDEMDVEVE. Cys-57 and Cys-63 are disulfide-bonded.

As to expression, expressed by the skin glands.

The protein resides in the secreted. The synthetic peptide has antimicrobial activity against Gram-negative bacterium B.dysenteriae (MIC=35 ug/ml), against Gram-positive bacteria S.aureus ATCC 2592 (MIC=4.7 ug/ml) and B.subtilis ATCC 6633 (MIC=9.38 ug/ml) and against fungus C.albicans (MIC=18.75 ug/ml). Has no activity against Gram-negative bacterium E.coli ATCC 25922 but exhibits low hemolytic activity at concentrations up to 200 ug/ml. The chain is Jingdongin-1 from Amolops jingdongensis (Chinese torrent frog).